The sequence spans 359 residues: Mannonate dehydratase (359 aa).

Belongs to the mannonate dehydratase family. Requires Fe(2+) as cofactor. Mn(2+) is required as a cofactor.

It carries out the reaction D-mannonate = 2-dehydro-3-deoxy-D-gluconate + H2O. It participates in carbohydrate metabolism; pentose and glucuronate interconversion. Functionally, catalyzes the dehydration of D-mannonate. This Moorella thermoacetica (strain ATCC 39073 / JCM 9320) protein is Mannonate dehydratase.